The sequence spans 36 residues: Mating hormone A-factor 1 (36 aa).

Positions 1–21 (MQPSTATAAPKEKTSSEKKDN) are excised as a propeptide. A Cysteine methyl ester modification is found at Cys-33. Cys-33 is lipidated: S-farnesyl cysteine. Positions 34-36 (VIA) are cleaved as a propeptide — removed in mature form.

The protein localises to the cell membrane. The active factor is excreted into the culture medium by haploid cells of the A mating type and acts on cells of the opposite mating type (type alpha). It mediates the conjugation process between the two types by inhibiting the initiation of DNA synthesis in type alpha cells and synchronizing them with type A. The polypeptide is Mating hormone A-factor 1 (MFA1) (Saccharomyces cerevisiae (strain ATCC 204508 / S288c) (Baker's yeast)).